The sequence spans 626 residues: Chaperone protein HtpG (626 aa).

Residues 1-341 are a; substrate-binding; the sequence is METKQFKAES…SEDLSLNISR (341 aa). The b stretch occupies residues 342 to 552; it reads EILQHDRQLK…EGELSIEMEK (211 aa). The interval 490–509 is disordered; it reads DLGIEGEEKENTSSSDDKEN. Positions 498 to 509 are enriched in basic and acidic residues; sequence KENTSSSDDKEN. Residues 553-626 are c; that stretch reads VLNAMPNNQN…FTNNICKIMK (74 aa).

This sequence belongs to the heat shock protein 90 family. In terms of assembly, homodimer.

It is found in the cytoplasm. Functionally, molecular chaperone. Has ATPase activity. This Clostridium botulinum (strain Loch Maree / Type A3) protein is Chaperone protein HtpG.